Here is a 390-residue protein sequence, read N- to C-terminus: Homeobox protein Meis1 (390 aa).

Residues 108–192 (GGDVCSSESF…IDLVIDDREG (85 aa)) form the MEIS N-terminal domain. A compositionally biased stretch (basic and acidic residues) spans 190-202 (REGGSKSDSEDVT). A disordered region spans residues 190–279 (REGGSKSDSE…KKRHKKRGIF (90 aa)). Over residues 203–213 (RSANLTDQPSW) the composition is skewed to polar residues. The segment at residues 272 to 334 (RHKKRGIFPK…NARRRIVQPM (63 aa)) is a DNA-binding region (homeobox; TALE-type). The tract at residues 299–329 (YPSEEQKKQLAQDTGLTILQVNNWFINARRR) is interaction with DNA. The required for transcriptional activation stretch occupies residues 335–390 (IDQSNRAVSQGTPYNPDGQPMGGFVMDGQQHMGIRAPGPMSGMGMNMGMEGQWHYM).

The protein belongs to the TALE/MEIS homeobox family. In terms of assembly, interacts with the N-terminal region of PBX1 to form a heterodimer which binds DNA including a cAMP-responsive sequence in CYP17. Also forms heterodimers with PBX2. Forms heterotrimers with PBX1 or PBX2 and a number of HOX proteins including HOXA9, HOXD4 and HOXD9 where it acts as a non-DNA-binding partner. Also forms heterotrimers with PBX1 and HOX proteins including HOXD9 and HOXD10 where PBX1 is the non-DNA-binding partner. Heterodimer with DLX3. Heterodimer with HOXB13. In terms of tissue distribution, expressed at high levels in the lung with lower levels detected in the heart and brain. Expressed in pancreatic islets (beta-cells and non-beta-cells).

It is found in the nucleus. Functionally, acts as a transcriptional regulator of PAX6. Also acts as a transcriptional activator of PF4 in complex with PBX1 or PBX2. Required for hematopoiesis, megakaryocyte lineage development and vascular patterning. May function as a cofactor for HOXA7 and HOXA9 in the induction of myeloid leukemias. The sequence is that of Homeobox protein Meis1 (Meis1) from Mus musculus (Mouse).